We begin with the raw amino-acid sequence, 660 residues long: Bifunctional polymyxin resistance protein ArnA (660 aa).

The formyltransferase ArnAFT stretch occupies residues 1–304 (MKAIVFAYHD…EMGIVTDVRV (304 aa)). H104 serves as the catalytic Proton donor; for formyltransferase activity. Residues R114 and 136-140 (TAKAD) contribute to the (6R)-10-formyltetrahydrofolate site. The tract at residues 314–660 (RRQRVLILGV…RGAVEELGNK (347 aa)) is dehydrogenase ArnADH. Residues D347 and 368 to 369 (DV) each bind NAD(+). Residues A393, Y398, and 432–433 (TS) each bind UDP-alpha-D-glucuronate. E434 (proton acceptor; for decarboxylase activity) is an active-site residue. UDP-alpha-D-glucuronate is bound by residues R460, N492, 526–535 (KLVDGGEQKR), and Y613. The active-site Proton donor; for decarboxylase activity is R619.

It in the N-terminal section; belongs to the Fmt family. UDP-L-Ara4N formyltransferase subfamily. This sequence in the C-terminal section; belongs to the NAD(P)-dependent epimerase/dehydratase family. UDP-glucuronic acid decarboxylase subfamily. Homohexamer, formed by a dimer of trimers.

The enzyme catalyses UDP-alpha-D-glucuronate + NAD(+) = UDP-beta-L-threo-pentopyranos-4-ulose + CO2 + NADH. It catalyses the reaction UDP-4-amino-4-deoxy-beta-L-arabinose + (6R)-10-formyltetrahydrofolate = UDP-4-deoxy-4-formamido-beta-L-arabinose + (6S)-5,6,7,8-tetrahydrofolate + H(+). It functions in the pathway nucleotide-sugar biosynthesis; UDP-4-deoxy-4-formamido-beta-L-arabinose biosynthesis; UDP-4-deoxy-4-formamido-beta-L-arabinose from UDP-alpha-D-glucuronate: step 1/3. Its pathway is nucleotide-sugar biosynthesis; UDP-4-deoxy-4-formamido-beta-L-arabinose biosynthesis; UDP-4-deoxy-4-formamido-beta-L-arabinose from UDP-alpha-D-glucuronate: step 3/3. The protein operates within bacterial outer membrane biogenesis; lipopolysaccharide biosynthesis. Its function is as follows. Bifunctional enzyme that catalyzes the oxidative decarboxylation of UDP-glucuronic acid (UDP-GlcUA) to UDP-4-keto-arabinose (UDP-Ara4O) and the addition of a formyl group to UDP-4-amino-4-deoxy-L-arabinose (UDP-L-Ara4N) to form UDP-L-4-formamido-arabinose (UDP-L-Ara4FN). The modified arabinose is attached to lipid A and is required for resistance to polymyxin and cationic antimicrobial peptides. The sequence is that of Bifunctional polymyxin resistance protein ArnA from Proteus mirabilis (strain HI4320).